A 35-amino-acid chain; its full sequence is Cytochrome b6-f complex subunit 7 (35 aa).

A helical transmembrane segment spans residues 9–27 (AGLSIVLTLVGVALGYGIL).

Belongs to the PetM family. In terms of assembly, the 4 large subunits of the cytochrome b6-f complex are cytochrome b6, subunit IV (17 kDa polypeptide, PetD), cytochrome f and the Rieske protein, while the 4 small subunits are PetG, PetL, PetM and PetN. The complex functions as a dimer.

It is found in the cellular thylakoid membrane. Its function is as follows. Component of the cytochrome b6-f complex, which mediates electron transfer between photosystem II (PSII) and photosystem I (PSI), cyclic electron flow around PSI, and state transitions. In Synechococcus sp. (strain JA-3-3Ab) (Cyanobacteria bacterium Yellowstone A-Prime), this protein is Cytochrome b6-f complex subunit 7.